A 492-amino-acid polypeptide reads, in one-letter code: Excitatory amino acid transporter (492 aa).

The Cytoplasmic segment spans residues 1–7; it reads MVSWIRK. 3 helical membrane passes run 8 to 28, 47 to 67, and 85 to 105; these read NLLL…GFLL, LLMH…LISG, and TYYM…VLVI. Residues 106 to 191 are Extracellular-facing; that stretch reads HPGDPTIKKE…VKASVEYTSG (86 aa). N-linked (GlcNAc...) asparagine glycosylation is found at N166 and N176. 5 helical membrane-spanning segments follow: residues 192–212, 228–248, 270–290, 358–378, and 389–409; these read MNVL…SQLG, VIMK…LCLI, VTVL…IFFV, AVAA…GQVV, and IGAA…LTAV.

The protein belongs to the dicarboxylate/amino acid:cation symporter (DAACS) (TC 2.A.23) family.

The protein resides in the membrane. Transports L-glutamate and also L- and D-aspartate. Essential for terminating the postsynaptic action of glutamate by rapidly removing released glutamate from the synaptic cleft. Acts as a symport by cotransporting sodium. This chain is Excitatory amino acid transporter (GLT-1), found in Onchocerca volvulus.